Consider the following 397-residue polypeptide: MVGNNTAYNTNAPKSVGPWRSTNKLVKIMNDSFYDLPCPVNLNAWWSFGSMLGLCLVIQLLSGLLLSAHYTAHEDMAFDSVVHIMRNVEKGWMLRNIHANGSSMFFICIYAHIARGLYYGSYLDKTVWYFGVHLFLLTMAEAFLGYTLPWGQMSYWGATVITNMLSVSPVVGESMLRYVWGGWTVCNATLKRFYTLHFLLPFVMVAVVFLHLFFLHEKGSNNPLGIESGTMCVPFHPFYTIKDLFGYVCFSFFFMYLVCVDPELLGNHLNYWPANPMKTPIHVQPEWYFMFAYAILRSIPHKAGGVYVMFLSIVVLYLIPTLHTGKYRSLCFYPLNQVVFWVLVGSFISLTWIGARPVREPYIILGSAFQLFISLVYCWTPFLYGCEMNYLNTLNFV.

Helical transmembrane passes span 48 to 68 (FGSM…LLSA), 92 to 113 (WMLR…YAHI), 128 to 148 (WYFG…GYTL), and 193 to 213 (FYTL…LHLF). 2 residues coordinate heme b: His98 and His112. Heme b contacts are provided by His197 and His211. His216 is an a ubiquinone binding site. The next 4 helical transmembrane spans lie at 241-261 (IKDL…VCVD), 303-323 (AGGV…PTLH), 335-355 (LNQV…WIGA), and 362-382 (YIIL…WTPF).

It belongs to the cytochrome b family. As to quaternary structure, the main subunits of complex b-c1 are: cytochrome b, cytochrome c1 and the Rieske protein. The cofactor is heme b.

The protein localises to the mitochondrion inner membrane. Functionally, component of the ubiquinol-cytochrome c reductase complex (complex III or cytochrome b-c1 complex) that is part of the mitochondrial respiratory chain. The b-c1 complex mediates electron transfer from ubiquinol to cytochrome c. Contributes to the generation of a proton gradient across the mitochondrial membrane that is then used for ATP synthesis. The polypeptide is Cytochrome b (MT-CYB) (Mytilus edulis (Blue mussel)).